Here is a 325-residue protein sequence, read N- to C-terminus: HPr kinase/phosphorylase (325 aa).

Catalysis depends on residues His-152 and Lys-173. 167 to 174 (GESGLGKS) is a binding site for ATP. Position 174 (Ser-174) interacts with Mg(2+). Asp-191 acts as the Proton acceptor; for phosphorylation activity. Proton donor; for dephosphorylation activity in catalysis. The segment at 215–224 (LEVRGIGLLD) is important for the catalytic mechanism of both phosphorylation and dephosphorylation. Glu-216 lines the Mg(2+) pocket. The active site involves Arg-258. The important for the catalytic mechanism of dephosphorylation stretch occupies residues 279-284 (AVDAGR).

Belongs to the HPrK/P family. As to quaternary structure, homohexamer. Mg(2+) is required as a cofactor.

It catalyses the reaction [HPr protein]-L-serine + ATP = [HPr protein]-O-phospho-L-serine + ADP + H(+). It carries out the reaction [HPr protein]-O-phospho-L-serine + phosphate + H(+) = [HPr protein]-L-serine + diphosphate. Catalyzes the ATP- as well as the pyrophosphate-dependent phosphorylation of a specific serine residue in HPr, a phosphocarrier protein of the phosphoenolpyruvate-dependent sugar phosphotransferase system (PTS). HprK/P also catalyzes the pyrophosphate-producing, inorganic phosphate-dependent dephosphorylation (phosphorolysis) of seryl-phosphorylated HPr (P-Ser-HPr). The polypeptide is HPr kinase/phosphorylase (Leptothrix cholodnii (strain ATCC 51168 / LMG 8142 / SP-6) (Leptothrix discophora (strain SP-6))).